A 180-amino-acid polypeptide reads, in one-letter code: Inner membrane-spanning protein YciB (180 aa).

The next 5 helical transmembrane spans lie at 25-45 (QNAT…CYVI), 49-69 (VSKL…ITLI), 76-96 (IKIK…MSGI), 118-138 (IILS…NEIV), and 150-170 (FKVF…LPLL).

Belongs to the YciB family.

The protein resides in the cell inner membrane. Plays a role in cell envelope biogenesis, maintenance of cell envelope integrity and membrane homeostasis. This Rickettsia felis (strain ATCC VR-1525 / URRWXCal2) (Rickettsia azadi) protein is Inner membrane-spanning protein YciB.